The primary structure comprises 193 residues: Thymidine kinase (193 aa).

Residues 9–16 (STMNAGKS) and 87–90 (DEAN) each bind ATP. The Proton acceptor role is filled by glutamate 88. The Zn(2+) site is built by cysteine 145, cysteine 147, cysteine 182, and histidine 185.

The protein belongs to the thymidine kinase family. Homotetramer.

The protein localises to the cytoplasm. It carries out the reaction thymidine + ATP = dTMP + ADP + H(+). This is Thymidine kinase from Agrobacterium fabrum (strain C58 / ATCC 33970) (Agrobacterium tumefaciens (strain C58)).